A 305-amino-acid chain; its full sequence is U6 small nuclear RNA (adenine-(43)-N(6))-methyltransferase (305 aa).

S-adenosyl-L-methionine-binding residues include Arg-85, Gly-110, Glu-133, Ser-164, and Asn-186. Residues 194–217 (SPNPFGGNTRNPQRRPAPNNVRTG) form a disordered region.

This sequence belongs to the methyltransferase superfamily. METTL16/RlmF family.

It carries out the reaction adenosine in U6 snRNA + S-adenosyl-L-methionine = N(6)-methyladenosine in U6 snRNA + S-adenosyl-L-homocysteine + H(+). RNA N6-methyltransferase that mediates N6-methylation of adenine of U6 small nuclear RNA (U6 snRNA). The polypeptide is U6 small nuclear RNA (adenine-(43)-N(6))-methyltransferase (Drosophila pseudoobscura pseudoobscura (Fruit fly)).